Here is a 409-residue protein sequence, read N- to C-terminus: Putative lipoate-protein ligase A (409 aa).

Residues Gly-146–Gly-330 form the BPL/LPL catalytic domain. ATP-binding positions include Arg-188, Gly-193–Leu-196, and Lys-249. Lys-249 is a binding site for (R)-lipoate.

It belongs to the LplA family. As to quaternary structure, monomer.

The enzyme catalyses L-lysyl-[lipoyl-carrier protein] + (R)-lipoate + ATP = N(6)-[(R)-lipoyl]-L-lysyl-[lipoyl-carrier protein] + AMP + diphosphate + H(+). It functions in the pathway protein modification; protein lipoylation via exogenous pathway; protein N(6)-(lipoyl)lysine from lipoate: step 1/2. The protein operates within protein modification; protein lipoylation via exogenous pathway; protein N(6)-(lipoyl)lysine from lipoate: step 2/2. In terms of biological role, catalyzes both the ATP-dependent activation of exogenously supplied lipoate to lipoyl-AMP and the transfer of the activated lipoyl onto the lipoyl domains of lipoate-dependent enzymes. This chain is Putative lipoate-protein ligase A (AIM22), found in Saccharomyces cerevisiae (strain ATCC 204508 / S288c) (Baker's yeast).